The chain runs to 411 residues: Multifunctional CCA protein (411 aa).

ATP contacts are provided by glycine 8 and arginine 11. The CTP site is built by glycine 8 and arginine 11. Positions 21 and 23 each coordinate Mg(2+). Positions 91, 143, and 146 each coordinate ATP. Residues arginine 91, arginine 143, and arginine 146 each coordinate CTP. An HD domain is found at 232–333 (TGVHVMMVID…MRLLERCDAL (102 aa)).

It belongs to the tRNA nucleotidyltransferase/poly(A) polymerase family. Bacterial CCA-adding enzyme type 1 subfamily. In terms of assembly, monomer. Can also form homodimers and oligomers. Mg(2+) serves as cofactor. It depends on Ni(2+) as a cofactor.

It carries out the reaction a tRNA precursor + 2 CTP + ATP = a tRNA with a 3' CCA end + 3 diphosphate. It catalyses the reaction a tRNA with a 3' CCA end + 2 CTP + ATP = a tRNA with a 3' CCACCA end + 3 diphosphate. In terms of biological role, catalyzes the addition and repair of the essential 3'-terminal CCA sequence in tRNAs without using a nucleic acid template. Adds these three nucleotides in the order of C, C, and A to the tRNA nucleotide-73, using CTP and ATP as substrates and producing inorganic pyrophosphate. tRNA 3'-terminal CCA addition is required both for tRNA processing and repair. Also involved in tRNA surveillance by mediating tandem CCA addition to generate a CCACCA at the 3' terminus of unstable tRNAs. While stable tRNAs receive only 3'-terminal CCA, unstable tRNAs are marked with CCACCA and rapidly degraded. This is Multifunctional CCA protein from Cupriavidus necator (strain ATCC 17699 / DSM 428 / KCTC 22496 / NCIMB 10442 / H16 / Stanier 337) (Ralstonia eutropha).